We begin with the raw amino-acid sequence, 716 residues long: Leucine-rich repeat neuronal protein 1 (716 aa).

An N-terminal signal peptide occupies residues 1-25 (MARMSFVIAACQLVLGLLMTSLTES). The LRRNT domain occupies 26-72 (SIQNSECPQLCVCEIRPWFTPQSTYREATTVDCNDLRLTRIPSNLSS). Topologically, residues 26–631 (SIQNSECPQL…DISDQETSTA (606 aa)) are extracellular. LRR repeat units follow at residues 73-95 (DTQV…QQLF), 96-117 (NLTE…GLAN), 120-141 (QLTT…CLQD), 144-165 (NLQE…AFAG), 168-189 (NLLR…WFDS), 192-213 (NLEI…NFKP), 216-237 (NLRS…ALVG), 240-261 (SLES…ALQK), 264-285 (NLKF…DFKN), 313-335 (ELTK…AFRS), and 338-359 (ALES…TVES). N-linked (GlcNAc...) asparagine glycosylation is found at Asn96 and Asn117. Residues 371-424 (NPLRCDCVIHWINSNKTNIRFMEPLSMFCAMPPEYKGHQVKEVLIQDSSEQCLP) enclose the LRRCT domain. N-linked (GlcNAc...) asparagine glycosylation is present at Asn385. The Ig-like C2-type domain maps to 424–515 (PMISHDSFPN…GADTRVATIK (92 aa)). Cys447 and Cys499 are disulfide-bonded. An N-linked (GlcNAc...) asparagine glycan is attached at Asn517. The 93-residue stretch at 525 to 617 (QVLKIYVKQT…SCVNVTTKNA (93 aa)) folds into the Fibronectin type-III domain. Residues 632-652 (LAAVMGSMFAVISLASIAVYF) traverse the membrane as a helical segment. Residues 653 to 716 (AKRFKRKNYH…VDTSRSYYMW (64 aa)) lie on the Cytoplasmic side of the membrane. Over residues 691–700 (DSEKDKDGSA) the composition is skewed to basic and acidic residues. Residues 691–716 (DSEKDKDGSADTKPTQVDTSRSYYMW) are disordered. Polar residues predominate over residues 702–716 (TKPTQVDTSRSYYMW).

It is found in the membrane. The polypeptide is Leucine-rich repeat neuronal protein 1 (LRRN1) (Homo sapiens (Human)).